The following is a 200-amino-acid chain: Lipopolysaccharide core heptose(II)-phosphate phosphatase (200 aa).

Positions 1-25 (MLAFCRSSLKSKKYFIILLALAAIA) are cleaved as a signal peptide.

It belongs to the phosphoglycerate mutase family. Ais subfamily.

It is found in the periplasm. It participates in bacterial outer membrane biogenesis; lipopolysaccharide metabolism. Catalyzes the dephosphorylation of heptose(II) of the outer membrane lipopolysaccharide core. This chain is Lipopolysaccharide core heptose(II)-phosphate phosphatase, found in Escherichia coli O7:K1 (strain IAI39 / ExPEC).